A 145-amino-acid polypeptide reads, in one-letter code: Superoxide dismutase [Mn/Fe] (145 aa).

Residues His10 and His64 each coordinate Fe(3+). 2 residues coordinate Mn(2+): His10 and His64.

This sequence belongs to the iron/manganese superoxide dismutase family. Requires Mn(2+) as cofactor. It depends on Fe(3+) as a cofactor.

It carries out the reaction 2 superoxide + 2 H(+) = H2O2 + O2. Its function is as follows. Destroys superoxide anion radicals which are normally produced within the cells and which are toxic to biological systems. Catalyzes the dismutation of superoxide anion radicals into O2 and H2O2 by successive reduction and oxidation of the transition metal ion at the active site. This Streptococcus salivarius protein is Superoxide dismutase [Mn/Fe] (sodA).